The following is a 379-amino-acid chain: Glutamate 5-kinase (379 aa).

Residue Lys19 participates in ATP binding. Substrate-binding residues include Ser59, Asp146, and Asn158. Residues 178–179 (TD) and 220–226 (TGGMATK) contribute to the ATP site. A PUA domain is found at 285 to 363 (SGDIIIDDGA…KDIISILGHD (79 aa)).

The protein belongs to the glutamate 5-kinase family.

It localises to the cytoplasm. The enzyme catalyses L-glutamate + ATP = L-glutamyl 5-phosphate + ADP. Its pathway is amino-acid biosynthesis; L-proline biosynthesis; L-glutamate 5-semialdehyde from L-glutamate: step 1/2. In terms of biological role, catalyzes the transfer of a phosphate group to glutamate to form L-glutamate 5-phosphate. This chain is Glutamate 5-kinase, found in Vibrio campbellii (strain ATCC BAA-1116).